The following is a 405-amino-acid chain: Arginine biosynthesis bifunctional protein ArgJ (405 aa).

The substrate site is built by T155, K181, T192, E278, N400, and T405. T192 functions as the Nucleophile in the catalytic mechanism.

It belongs to the ArgJ family. In terms of assembly, heterotetramer of two alpha and two beta chains.

It is found in the cytoplasm. The catalysed reaction is N(2)-acetyl-L-ornithine + L-glutamate = N-acetyl-L-glutamate + L-ornithine. The enzyme catalyses L-glutamate + acetyl-CoA = N-acetyl-L-glutamate + CoA + H(+). The protein operates within amino-acid biosynthesis; L-arginine biosynthesis; L-ornithine and N-acetyl-L-glutamate from L-glutamate and N(2)-acetyl-L-ornithine (cyclic): step 1/1. Its pathway is amino-acid biosynthesis; L-arginine biosynthesis; N(2)-acetyl-L-ornithine from L-glutamate: step 1/4. Its function is as follows. Catalyzes two activities which are involved in the cyclic version of arginine biosynthesis: the synthesis of N-acetylglutamate from glutamate and acetyl-CoA as the acetyl donor, and of ornithine by transacetylation between N(2)-acetylornithine and glutamate. The polypeptide is Arginine biosynthesis bifunctional protein ArgJ (Dehalococcoides mccartyi (strain CBDB1)).